The sequence spans 79 residues: Large ribosomal subunit protein uL29 (79 aa).

It belongs to the universal ribosomal protein uL29 family.

This Tropheryma whipplei (strain Twist) (Whipple's bacillus) protein is Large ribosomal subunit protein uL29.